A 30-amino-acid polypeptide reads, in one-letter code: Hemocyanin subunit 2 (30 aa).

It belongs to the tyrosinase family. Hemocyanin subfamily. In terms of tissue distribution, hemolymph.

The protein localises to the secreted. The protein resides in the extracellular space. Hemocyanins are copper-containing oxygen carriers occurring freely dissolved in the hemolymph of many mollusks and arthropods. The protein is Hemocyanin subunit 2 of Homarus americanus (American lobster).